The primary structure comprises 302 residues: Phosphoribosylaminoimidazole-succinocarboxamide synthase (302 aa).

Belongs to the SAICAR synthetase family.

The catalysed reaction is 5-amino-1-(5-phospho-D-ribosyl)imidazole-4-carboxylate + L-aspartate + ATP = (2S)-2-[5-amino-1-(5-phospho-beta-D-ribosyl)imidazole-4-carboxamido]succinate + ADP + phosphate + 2 H(+). It participates in purine metabolism; IMP biosynthesis via de novo pathway; 5-amino-1-(5-phospho-D-ribosyl)imidazole-4-carboxamide from 5-amino-1-(5-phospho-D-ribosyl)imidazole-4-carboxylate: step 1/2. The polypeptide is Phosphoribosylaminoimidazole-succinocarboxamide synthase (Ralstonia nicotianae (strain ATCC BAA-1114 / GMI1000) (Ralstonia solanacearum)).